The following is a 368-amino-acid chain: Probable endopolygalacturonase I (368 aa).

An N-terminal signal peptide occupies residues 1–18; the sequence is MHSFQLLGLAALGSLVAA. The propeptide occupies 19–31; it reads APSPSRVSDLTER. A disulfide bridge links Cys-35 with Cys-50. PbH1 repeat units follow at residues 162–192, 193–214, 215–235, 244–265, 273–295, and 307–328; these read ANNL…DISE, SNGV…AINS, GKNI…SIGS, VQGV…RIKT, VSDV…VIQQ, and SNGI…DSKA. Residue Asp-207 is the Proton donor of the active site. Cys-209 and Cys-225 form a disulfide bridge. His-229 is an active-site residue. Intrachain disulfides connect Cys-335–Cys-340 and Cys-359–Cys-368.

It belongs to the glycosyl hydrolase 28 family.

The protein localises to the secreted. It carries out the reaction (1,4-alpha-D-galacturonosyl)n+m + H2O = (1,4-alpha-D-galacturonosyl)n + (1,4-alpha-D-galacturonosyl)m.. Its function is as follows. Involved in maceration and soft-rotting of plant tissue. Hydrolyzes the 1,4-alpha glycosidic bonds of de-esterified pectate in the smooth region of the plant cell wall. The protein is Probable endopolygalacturonase I (pgaI) of Aspergillus terreus (strain NIH 2624 / FGSC A1156).